The following is a 285-amino-acid chain: Pantothenate synthetase (285 aa).

30 to 37 (MGNLHAGH) lines the ATP pocket. The Proton donor role is filled by His37. Residue Gln61 participates in (R)-pantoate binding. Gln61 is a binding site for beta-alanine. Residue 149-152 (GEKD) participates in ATP binding. Gln155 serves as a coordination point for (R)-pantoate. Residue 186–189 (LSSR) coordinates ATP.

It belongs to the pantothenate synthetase family. In terms of assembly, homodimer.

Its subcellular location is the cytoplasm. It carries out the reaction (R)-pantoate + beta-alanine + ATP = (R)-pantothenate + AMP + diphosphate + H(+). It functions in the pathway cofactor biosynthesis; (R)-pantothenate biosynthesis; (R)-pantothenate from (R)-pantoate and beta-alanine: step 1/1. In terms of biological role, catalyzes the condensation of pantoate with beta-alanine in an ATP-dependent reaction via a pantoyl-adenylate intermediate. The polypeptide is Pantothenate synthetase (Ectopseudomonas mendocina (strain ymp) (Pseudomonas mendocina)).